A 122-amino-acid polypeptide reads, in one-letter code: Large ribosomal subunit protein uL14 (122 aa).

Belongs to the universal ribosomal protein uL14 family. Part of the 50S ribosomal subunit. Forms a cluster with proteins L3 and L19. In the 70S ribosome, L14 and L19 interact and together make contacts with the 16S rRNA in bridges B5 and B8.

Functionally, binds to 23S rRNA. Forms part of two intersubunit bridges in the 70S ribosome. In Paracoccus denitrificans (strain Pd 1222), this protein is Large ribosomal subunit protein uL14.